The chain runs to 545 residues: CTP synthase (545 aa).

Positions 1-265 (MSRFIFVTGG…DAIVVEKFGL (265 aa)) are amidoligase domain. Serine 13 is a CTP binding site. Serine 13 is a UTP binding site. Residue 14-19 (SLGKGI) coordinates ATP. Tyrosine 54 is a binding site for L-glutamine. Aspartate 71 lines the ATP pocket. Positions 71 and 139 each coordinate Mg(2+). CTP contacts are provided by residues 146–148 (DIE), 186–191 (KTKPTQ), and lysine 222. Residues 186–191 (KTKPTQ) and lysine 222 each bind UTP. In terms of domain architecture, Glutamine amidotransferase type-1 spans 290-541 (TVGMVGKYIE…VAAALAEQKA (252 aa)). Glycine 351 serves as a coordination point for L-glutamine. The Nucleophile; for glutamine hydrolysis role is filled by cysteine 378. L-glutamine-binding positions include 379-382 (LGMQ), glutamate 402, and arginine 469. Active-site residues include histidine 514 and glutamate 516.

It belongs to the CTP synthase family. As to quaternary structure, homotetramer.

The catalysed reaction is UTP + L-glutamine + ATP + H2O = CTP + L-glutamate + ADP + phosphate + 2 H(+). It catalyses the reaction L-glutamine + H2O = L-glutamate + NH4(+). The enzyme catalyses UTP + NH4(+) + ATP = CTP + ADP + phosphate + 2 H(+). Its pathway is pyrimidine metabolism; CTP biosynthesis via de novo pathway; CTP from UDP: step 2/2. Its activity is regulated as follows. Allosterically activated by GTP, when glutamine is the substrate; GTP has no effect on the reaction when ammonia is the substrate. The allosteric effector GTP functions by stabilizing the protein conformation that binds the tetrahedral intermediate(s) formed during glutamine hydrolysis. Inhibited by the product CTP, via allosteric rather than competitive inhibition. Its function is as follows. Catalyzes the ATP-dependent amination of UTP to CTP with either L-glutamine or ammonia as the source of nitrogen. Regulates intracellular CTP levels through interactions with the four ribonucleotide triphosphates. The chain is CTP synthase from Alcanivorax borkumensis (strain ATCC 700651 / DSM 11573 / NCIMB 13689 / SK2).